The chain runs to 448 residues: UDP-N-acetylmuramoylalanine--D-glutamate ligase (448 aa).

112–118 (GSNAKST) contributes to the ATP binding site.

This sequence belongs to the MurCDEF family.

The protein localises to the cytoplasm. It catalyses the reaction UDP-N-acetyl-alpha-D-muramoyl-L-alanine + D-glutamate + ATP = UDP-N-acetyl-alpha-D-muramoyl-L-alanyl-D-glutamate + ADP + phosphate + H(+). It functions in the pathway cell wall biogenesis; peptidoglycan biosynthesis. Its function is as follows. Cell wall formation. Catalyzes the addition of glutamate to the nucleotide precursor UDP-N-acetylmuramoyl-L-alanine (UMA). This Acinetobacter baumannii (strain ACICU) protein is UDP-N-acetylmuramoylalanine--D-glutamate ligase.